A 415-amino-acid polypeptide reads, in one-letter code: Corticotropin-releasing factor receptor 1 (415 aa).

The first 23 residues, 1–23 (MGRRPQLRLVKALLLLGLNPVST), serve as a signal peptide directing secretion. Topologically, residues 24–111 (SLQDQRCENL…CQEILNEEKK (88 aa)) are extracellular. Disulfide bonds link Cys30–Cys54, Cys44–Cys87, and Cys68–Cys102. N-linked (GlcNAc...) asparagine glycans are attached at residues Asn38, Asn45, Asn78, Asn90, and Asn98. Positions 99–108 (YSECQEILNE) are important for peptide agonist binding. The helical transmembrane segment at 112–142 (SKVHYHVAVIINYLGHCISLVALLVAFVLFL) threads the bilayer. Topologically, residues 143–149 (RLRSIRC) are cytoplasmic. The chain crosses the membrane as a helical span at residues 150–174 (LRNIIHWNLISAFILRNATWFVVQL). The Extracellular segment spans residues 175–189 (TVSPEVHQSNVAWCR). Cys188 and Cys258 are joined by a disulfide. Residues 190–218 (LVTAAYNYFHVTNFFWMFGEGCYLHTAIV) form a helical membrane-spanning segment. At 219–225 (LTYSTDR) the chain is on the cytoplasmic side. The chain crosses the membrane as a helical span at residues 226-253 (LRKWMFVCIGWGVPFPIIVAWAIGKLHY). The Extracellular portion of the chain corresponds to 254–269 (DNEKCWFGKRPGVYTD). Residues 270 to 295 (YIYQGPMILVLLINFIFLFNIVRILM) form a helical membrane-spanning segment. Residues 280–290 (LLINFIFLFNI) form an important for antagonist binding region. The Cytoplasmic portion of the chain corresponds to 296–306 (TKLRASTTSET). Ser301 is modified (phosphoserine; by PKA). Residues 307-331 (IQYRKAVKATLVLLPLLGITYMLFF) form a helical membrane-spanning segment. Topologically, residues 332 to 338 (VNPGEDE) are extracellular. A helical membrane pass occupies residues 339–368 (VSRVVFIYFNSFLESFQGFFVSVFYCFLNS). Topologically, residues 369-415 (EVRSAIRKRWRRWQDKHSIRARVARAMSIPTSPTRVSFHSIKQSTAV) are cytoplasmic.

This sequence belongs to the G-protein coupled receptor 2 family. As to quaternary structure, interacts (via N-terminal extracellular domain) with CRH and UCN. Interacts with DLG1; this inhibits endocytosis of CRHR1 after agonist binding. Heterodimer; heterodimerizes with GPER1. C-terminal Ser or Thr residues may be phosphorylated. Post-translationally, phosphorylation at Ser-301 by PKA prevents maximal coupling to Gq-protein, and thereby negatively regulates downstream signaling. As to expression, detected in brain, especially in cerebellum. Detected in pituitary gland, and at lower levels in the olfactory bulb.

Its subcellular location is the cell membrane. The protein resides in the endosome. G-protein coupled receptor for CRH (corticotropin-releasing factor) and UCN (urocortin). Has high affinity for CRH and UCN. Ligand binding causes a conformation change that triggers signaling via guanine nucleotide-binding proteins (G proteins) and down-stream effectors, such as adenylate cyclase. Promotes the activation of adenylate cyclase, leading to increased intracellular cAMP levels. Inhibits the activity of the calcium channel CACNA1H. Required for normal embryonic development of the adrenal gland and for normal hormonal responses to stress. Plays a role in the response to anxiogenic stimuli. In Rattus norvegicus (Rat), this protein is Corticotropin-releasing factor receptor 1 (Crhr1).